The primary structure comprises 490 residues: Betaine aldehyde dehydrogenase (490 aa).

Positions 26, 27, and 93 each coordinate K(+). G150 to W152 lines the NAD(+) pocket. K162 (charge relay system) is an active-site residue. K176–E179 lines the NAD(+) pocket. K(+) is bound at residue V180. An NAD(+)-binding site is contributed by G230–T233. L246 lines the K(+) pocket. E252 functions as the Proton acceptor in the catalytic mechanism. Positions 254, 286, and 387 each coordinate NAD(+). The active-site Nucleophile is the C286. C286 carries the post-translational modification Cysteine sulfenic acid (-SOH). Residues K457 and G460 each contribute to the K(+) site. E464 acts as the Charge relay system in catalysis.

This sequence belongs to the aldehyde dehydrogenase family. As to quaternary structure, dimer of dimers. It depends on K(+) as a cofactor.

The enzyme catalyses betaine aldehyde + NAD(+) + H2O = glycine betaine + NADH + 2 H(+). It participates in amine and polyamine biosynthesis; betaine biosynthesis via choline pathway; betaine from betaine aldehyde: step 1/1. Functionally, involved in the biosynthesis of the osmoprotectant glycine betaine. Catalyzes the irreversible oxidation of betaine aldehyde to the corresponding acid. This is Betaine aldehyde dehydrogenase from Stutzerimonas stutzeri (strain A1501) (Pseudomonas stutzeri).